We begin with the raw amino-acid sequence, 439 residues long: Methionine aminopeptidase 2-2 (439 aa).

A disordered region spans residues 1–90 (MAAQTTEKLD…RVPVSNLFPN (90 aa)). A compositionally biased stretch (acidic residues) spans 28–41 (EAEEDSDDAQDEGA). Over residues 56-72 (KKKKKKKPKKKSKKKGG) the composition is skewed to basic residues. His-196 contacts substrate. A divalent metal cation-binding residues include Asp-216, Asp-227, and His-296. His-304 provides a ligand contact to substrate. A divalent metal cation is bound by residues Glu-329 and Glu-424.

The protein belongs to the peptidase M24A family. Methionine aminopeptidase eukaryotic type 2 subfamily. The cofactor is Co(2+). Zn(2+) serves as cofactor. It depends on Mn(2+) as a cofactor. Requires Fe(2+) as cofactor.

The protein resides in the cytoplasm. The catalysed reaction is Release of N-terminal amino acids, preferentially methionine, from peptides and arylamides.. Functionally, cotranslationally removes the N-terminal methionine from nascent proteins. The N-terminal methionine is often cleaved when the second residue in the primary sequence is small and uncharged (Met-Ala-, Cys, Gly, Pro, Ser, Thr, or Val). The protein is Methionine aminopeptidase 2-2 of Penicillium rubens (strain ATCC 28089 / DSM 1075 / NRRL 1951 / Wisconsin 54-1255) (Penicillium chrysogenum).